Reading from the N-terminus, the 87-residue chain is UPF0473 protein Daud_0916 (87 aa).

This sequence belongs to the UPF0473 family.

The sequence is that of UPF0473 protein Daud_0916 from Desulforudis audaxviator (strain MP104C).